Consider the following 442-residue polypeptide: GTPase Obg (442 aa).

Residues 1 to 158 (MFYDQARIFV…HWLELELKLL (158 aa)) enclose the Obg domain. An OBG-type G domain is found at 159 to 329 (ADVGLVGFPN…LIYHVHKGLE (171 aa)). GTP-binding positions include 165–172 (GFPNVGKS), 190–194 (FTTLE), 212–215 (DIPG), 282–285 (NKMD), and 310–312 (SAA). Mg(2+) contacts are provided by Ser-172 and Thr-192. The OCT domain occupies 349–427 (FTGKTEERFK…IGDLDFDFIE (79 aa)).

This sequence belongs to the TRAFAC class OBG-HflX-like GTPase superfamily. OBG GTPase family. Monomer. Requires Mg(2+) as cofactor.

The protein resides in the cytoplasm. An essential GTPase which binds GTP, GDP and possibly (p)ppGpp with moderate affinity, with high nucleotide exchange rates and a fairly low GTP hydrolysis rate. Plays a role in control of the cell cycle, stress response, ribosome biogenesis and in those bacteria that undergo differentiation, in morphogenesis control. This Heliobacterium modesticaldum (strain ATCC 51547 / Ice1) protein is GTPase Obg.